The sequence spans 510 residues: Leucine-rich repeat-containing protein 53 (510 aa).

LRR repeat units follow at residues 34 to 55 (TTRVLIITDGYLSSIESTNLSL), 58 to 79 (NLALLSLSRNGIEDVQEDALDG), 82 to 102 (MLRTLLLEHNQISSSSLTDHT), 108 to 129 (SLQVLVLSNNALRTLRGSWFRN), 132 to 153 (GLTRLQLDGNQITNLTDSSFGG), 158 to 179 (SLRHLDLSNNFISYIGKDAFRP), and 182 to 203 (QLQEVDLSRNRLAHMPDVFTPL). An LRRCT domain is found at 214–271 (NQWSCTCDLHPLARFLRNYIKSSAHTLRNAKDLNCQPSTAAVAAAQSVLRLSETNCDP). Residues 294–314 (LLTVLGFAGAVGLTCLGLVVF) traverse the membrane as a helical segment.

It is found in the membrane. The sequence is that of Leucine-rich repeat-containing protein 53 (LRRC53) from Macaca fascicularis (Crab-eating macaque).